The primary structure comprises 456 residues: Probable flavin-containing monoamine oxidase A (456 aa).

C394 is modified (S-8alpha-FAD cysteine).

It belongs to the flavin monoamine oxidase family. The cofactor is FAD.

The catalysed reaction is a secondary aliphatic amine + O2 + H2O = a primary amine + an aldehyde + H2O2. This is Probable flavin-containing monoamine oxidase A (maoA) from Dictyostelium discoideum (Social amoeba).